We begin with the raw amino-acid sequence, 538 residues long: C-22 sterol desaturase ERG5 (538 aa).

Residues 46-66 traverse the membrane as a helical segment; that stretch reads LKIFATLICILLVWDQVAYQI. Residues Lys164 and Lys198 each participate in a glycyl lysine isopeptide (Lys-Gly) (interchain with G-Cter in ubiquitin) cross-link. Cys476 serves as a coordination point for heme.

It belongs to the cytochrome P450 family. As to quaternary structure, interacts with ERG28. The cofactor is heme.

The protein resides in the endoplasmic reticulum membrane. It catalyses the reaction 5-dehydroepisterol + NADPH + O2 + H(+) = ergosta-5,7,22,24(28)-tetraen-3beta-ol + NADP(+) + 2 H2O. It functions in the pathway steroid metabolism; ergosterol biosynthesis; ergosterol from zymosterol: step 4/5. C-22 sterol desaturase; part of the third module of ergosterol biosynthesis pathway that includes the late steps of the pathway. ERG5 converts 5-dehydroepisterol into ergosta-5,7,22,24(28)-tetraen-3beta-ol by forming the C-22(23) double bond in the sterol side chain. The third module or late pathway involves the ergosterol synthesis itself through consecutive reactions that mainly occur in the endoplasmic reticulum (ER) membrane. Firstly, the squalene synthase ERG9 catalyzes the condensation of 2 farnesyl pyrophosphate moieties to form squalene, which is the precursor of all steroids. Squalene synthase is crucial for balancing the incorporation of farnesyl diphosphate (FPP) into sterol and nonsterol isoprene synthesis. Secondly, the squalene epoxidase ERG1 catalyzes the stereospecific oxidation of squalene to (S)-2,3-epoxysqualene, which is considered to be a rate-limiting enzyme in steroid biosynthesis. Then, the lanosterol synthase ERG7 catalyzes the cyclization of (S)-2,3 oxidosqualene to lanosterol, a reaction that forms the sterol core. In the next steps, lanosterol is transformed to zymosterol through a complex process involving various demethylation, reduction and desaturation reactions. The lanosterol 14-alpha-demethylase ERG11 (also known as CYP51) catalyzes C14-demethylation of lanosterol to produce 4,4'-dimethyl cholesta-8,14,24-triene-3-beta-ol, which is critical for ergosterol biosynthesis. The C-14 reductase ERG24 reduces the C14=C15 double bond of 4,4-dimethyl-cholesta-8,14,24-trienol to produce 4,4-dimethyl-cholesta-8,24-dienol. 4,4-dimethyl-cholesta-8,24-dienol is substrate of the C-4 demethylation complex ERG25-ERG26-ERG27 in which ERG25 catalyzes the three-step monooxygenation required for the demethylation of 4,4-dimethyl and 4alpha-methylsterols, ERG26 catalyzes the oxidative decarboxylation that results in a reduction of the 3-beta-hydroxy group at the C-3 carbon to an oxo group, and ERG27 is responsible for the reduction of the keto group on the C-3. ERG28 has a role as a scaffold to help anchor ERG25, ERG26 and ERG27 to the endoplasmic reticulum and ERG29 regulates the activity of the iron-containing C4-methylsterol oxidase ERG25. Then, the sterol 24-C-methyltransferase ERG6 catalyzes the methyl transfer from S-adenosyl-methionine to the C-24 of zymosterol to form fecosterol. The C-8 sterol isomerase ERG2 catalyzes the reaction which results in unsaturation at C-7 in the B ring of sterols and thus converts fecosterol to episterol. The sterol-C5-desaturase ERG3 then catalyzes the introduction of a C-5 double bond in the B ring to produce 5-dehydroepisterol. The C-22 sterol desaturase ERG5 further converts 5-dehydroepisterol into ergosta-5,7,22,24(28)-tetraen-3beta-ol by forming the C-22(23) double bond in the sterol side chain. Finally, ergosta-5,7,22,24(28)-tetraen-3beta-ol is substrate of the C-24(28) sterol reductase ERG4 to produce ergosterol. The protein is C-22 sterol desaturase ERG5 of Saccharomyces cerevisiae (strain ATCC 204508 / S288c) (Baker's yeast).